The primary structure comprises 89 residues: Small ribosomal subunit protein uS17 (89 aa).

Belongs to the universal ribosomal protein uS17 family. As to quaternary structure, part of the 30S ribosomal subunit.

One of the primary rRNA binding proteins, it binds specifically to the 5'-end of 16S ribosomal RNA. This chain is Small ribosomal subunit protein uS17, found in Xylella fastidiosa (strain Temecula1 / ATCC 700964).